The primary structure comprises 409 residues: Coagulation factor IX (409 aa).

Positions 1, 2, 7, 8, 16, 18, 21, 22, 27, 28, and 31 each coordinate Ca(2+). Residues 1–47 enclose the Gla domain; that stretch reads YNSGKLEESFVRGNLERECIEEKCSFEEAREVFENTEKTNEFWKQYV. E7, E8, E16, E18, E21, E22, E27, E28, E31, E34, E37, and E41 each carry 4-carboxyglutamate. Mg(2+) is bound at residue E16. A disulfide bridge connects residues C19 and C24. E21 contacts Mg(2+). Residue E27 participates in Mg(2+) binding. E31 provides a ligand contact to Mg(2+). Ca(2+) contacts are provided by E37, E41, D48, G49, and Q51. Mg(2+) contacts are provided by E37 and E41. The EGF-like 1; calcium-binding domain maps to 48 to 84; the sequence is DGDQCEPNPCLNGGLCKDDINSYECWCQVGFEGKNCE. Cystine bridges form between C52/C63, C57/C72, C74/C83, C89/C100, C96/C110, C112/C125, C133/C291, C208/C224, C338/C352, and C363/C391. Residues D65 and D66 each contribute to the Ca(2+) site. Residue D65 is modified to (3R)-3-hydroxyaspartate. S69 is modified (phosphoserine). The EGF-like 2 domain occupies 85-126; sequence LDATCNIKNGRCKQFCKTGADSKVLCSCTTGYRLAPDQKSCK. Positions 148-182 are cleaved as a propeptide — activation peptide; the sequence is AEIIFSNMDYENSTEVEPILDSLTESNQSSDDFIR. Y157 is subject to Sulfotyrosine. S160 is modified (phosphoserine). T161 carries the post-translational modification Phosphothreonine; alternate. Residue T161 is glycosylated (O-linked (GalNAc...) threonine; alternate). T171 carries O-linked (GalNAc...) threonine glycosylation. The N-linked (GlcNAc...) asparagine glycan is linked to N174. One can recognise a Peptidase S1 domain in the interval 183–409; sequence IVGGENAKPG…YTKVSRYVNW (227 aa). The active-site Charge relay system is the H223. Residues E237, N239, E242, E244, and E247 each contribute to the Ca(2+) site. The N-linked (GlcNAc...) asparagine glycan is linked to N262. Residue D271 is the Charge relay system of the active site. Residue S367 is the Charge relay system of the active site.

It belongs to the peptidase S1 family. In terms of assembly, heterodimer of a light chain and a heavy chain; disulfide-linked. Interacts (inactive and activated) with F11 (activated) in calcium-dependent manner. Interacts with SERPINC1. Activated by factor XIa, which excises the activation peptide. The propeptide can also be removed by snake venom protease. Activated by coagulation factor VIIa-tissue factor (F7-F3) complex in calcium-dependent manner. In terms of processing, the iron and 2-oxoglutarate dependent 3-hydroxylation of aspartate and asparagine is (R) stereospecific within EGF domains.

It localises to the secreted. It catalyses the reaction Selective cleavage of Arg-|-Ile bond in factor X to form factor Xa.. Factor IX is a vitamin K-dependent plasma protein that participates in the intrinsic pathway of blood coagulation by converting factor X to its active form in the presence of Ca(2+) ions, phospholipids, and factor VIIIa. The polypeptide is Coagulation factor IX (F9) (Sus scrofa (Pig)).